A 308-amino-acid chain; its full sequence is Glutaminase 2 (308 aa).

S66, N117, E161, N168, Y192, Y244, and V262 together coordinate substrate.

The protein belongs to the glutaminase family. Homotetramer.

The catalysed reaction is L-glutamine + H2O = L-glutamate + NH4(+). This Escherichia coli O157:H7 protein is Glutaminase 2.